Reading from the N-terminus, the 1511-residue chain is ATP-dependent permease PDR12 (1511 aa).

Over residues 1-21 (MSSTDEHIEKDISSRSNHDDD) the composition is skewed to basic and acidic residues. The disordered stretch occupies residues 1–37 (MSSTDEHIEKDISSRSNHDDDYANSVQSYAASEGQVD). Ser2 is subject to N-acetylserine. At 2–508 (SSTDEHIEKD…RGFQRVKGDS (507 aa)) the chain is on the cytoplasmic side. 3 positions are modified to phosphoserine: Ser32, Ser52, and Ser56. The region spanning 144-397 (IPAHLISKFT…FQRMGWVKPN (254 aa)) is the ABC transporter 1 domain. A Glycyl lysine isopeptide (Lys-Gly) (interchain with G-Cter in ubiquitin) cross-link involves residue Lys426. Residues 509–529 (TYTKVYLSSFLIKALIIGSMF) traverse the membrane as a helical segment. The Extracellular segment spans residues 530–548 (HKIDDKSQSTTAGAYSRGG). A helical transmembrane segment spans residues 549–569 (MLFYVLLFASVTSLAEIGNSF). Residues 570 to 597 (SSRPVIVKHKSYSMYHLSAESLQEIITE) are Cytoplasmic-facing. Residues 598-618 (FPTKFVAIVILCLITYWIPFM) traverse the membrane as a helical segment. Over 619–622 (KYEA) the chain is Extracellular. The helical transmembrane segment at 623 to 643 (GAFFQYILYLLTVQQCTSFIF) threads the bilayer. Residues 644–657 (KFVATMSKSGVDAH) lie on the Cytoplasmic side of the membrane. Residues 658–678 (AVGGLWVLMLCVYAGFVLPIG) form a helical membrane-spanning segment. The Extracellular portion of the chain corresponds to 679–765 (EMHHWIRWLH…FAYKHAWRNW (87 aa)). Residues 766–786 (GVNIVWTFGYIVFNVILSEYL) traverse the membrane as a helical segment. At 787–1182 (KPVEGGGDLL…WRSPVYIRAK (396 aa)) the chain is on the cytoplasmic side. In terms of domain architecture, ABC transporter 2 spans 836-1084 (IAEKDVFTWN…TLLKYFERQS (249 aa)). ATP-binding positions include 878-885 (GESGAGKT) and 972-979 (AEALVGKT). Residues 1183 to 1203 (FFECVACALFVGLSYVGVNHS) traverse the membrane as a helical segment. Position 1204 (Val1204) is a topological domain, extracellular. Residues 1205–1225 (GGAIEAFSSIFMLLLIALAMI) traverse the membrane as a helical segment. Over 1226–1254 (NQLHVFAYDSRELYEVREAASNTFHWSVL) the chain is Cytoplasmic. A helical transmembrane segment spans residues 1255 to 1275 (LLCHAAVENFWSTLCQFMCFI). At 1276–1291 (CYYWPAQFSGRASHAG) the chain is on the extracellular side. Residues 1292-1312 (FFFFFYVLIFPLYFVTYGLWI) form a helical membrane-spanning segment. Topologically, residues 1313–1318 (LYMSPD) are cytoplasmic. Residues 1319–1339 (VPSASMINSNLFAAMLLFCGI) traverse the membrane as a helical segment. Residues 1340–1444 (LQPREKMPAF…NVKWDHRWRN (105 aa)) are Extracellular-facing. Asn1405 carries an N-linked (GlcNAc...) asparagine glycan. Residues 1445–1465 (FGFMWAYICFNIAAMLICYYV) traverse the membrane as a helical segment. The Cytoplasmic portion of the chain corresponds to 1466-1511 (VRVKVWSLKSVLNFKKWFNGPRKERHEKDTNIFQTVPGDENKITKK).

It belongs to the ABC transporter superfamily. ABCG family. PDR (TC 3.A.1.205) subfamily.

Its subcellular location is the cell membrane. Functionally, plasma membrane transporter which mediates resistance to water-soluble, monocarboxylic acids with chain lengths of from C1 to C7 by active extrusion of the preservative anions from the cytosol. Also involved in the export of aromatic and branched-chain organic acids produced in amino acid catabolism. The protein is ATP-dependent permease PDR12 (PDR12) of Saccharomyces cerevisiae (strain ATCC 204508 / S288c) (Baker's yeast).